Reading from the N-terminus, the 776-residue chain is Protein translocase subunit SecA 2 (776 aa).

ATP-binding positions include Q80, 98 to 102, and D486; that span reads GEGKT.

The protein belongs to the SecA family. In terms of assembly, monomer and homodimer. Part of the essential Sec protein translocation apparatus which comprises SecA, SecYEG and auxiliary proteins SecDF. Other proteins may also be involved.

The protein localises to the cell membrane. Its subcellular location is the cytoplasm. It carries out the reaction ATP + H2O + cellular proteinSide 1 = ADP + phosphate + cellular proteinSide 2.. In terms of biological role, part of the Sec protein translocase complex. Interacts with the SecYEG preprotein conducting channel. Has a central role in coupling the hydrolysis of ATP to the transfer of proteins into and across the cell membrane, serving as an ATP-driven molecular motor driving the stepwise translocation of polypeptide chains across the membrane. This chain is Protein translocase subunit SecA 2, found in Listeria welshimeri serovar 6b (strain ATCC 35897 / DSM 20650 / CCUG 15529 / CIP 8149 / NCTC 11857 / SLCC 5334 / V8).